Consider the following 993-residue polypeptide: ATP-dependent DNA helicase MPH1 (993 aa).

One can recognise a Helicase ATP-binding domain in the interval 94–261 (IVHKSLFQNT…EVVNNLDISK (168 aa)). 107–114 (IPTGMGKT) provides a ligand contact to ATP. The short motif at 209–212 (DEAH) is the DEAH box element. The Helicase C-terminal domain maps to 507–655 (KVERLHRQEQ…CIDYKKSDRI (149 aa)). Residues 530-551 (NDKLERSARRTGSSEEAQISGM) are disordered. The span at 539–551 (RTGSSEEAQISGM) shows a compositional bias: polar residues. The interval 751 to 810 (LVTSNENPSKKRKIFKALDNLENDSTEEASSSLETEDEEVSDDNNVFIAEGQNGCQKDLE) is FKH1-binding region. 2 positions are modified to phosphothreonine: threonine 776 and threonine 785.

Belongs to the DEAD box helicase family. DEAH subfamily. FANCM sub-subfamily. Interacts with the MHF histone-fold complex composed of MHF1 and MHF2 to form the FANCM-MHF complex. Interacts with FHK1. Phosphorylation at both Thr-776 and Thr-785 is required for the interaction with FKH1.

The protein localises to the nucleus. The catalysed reaction is ATP + H2O = ADP + phosphate + H(+). Functionally, ATP-dependent DNA helicase involved in DNA damage repair by homologous recombination and in genome maintenance. Capable of unwinding D-loops. Plays a role in limiting crossover recombinants during mitotic DNA double-strand break (DSB) repair. Prevents crossovers between ectopic sequences by removing substrates for MUS81-MMS4 or RAD1-RAD10 cleavage. Component of a FANCM-MHF complex which promotes gene conversion at blocked replication forks, probably by reversal of the stalled fork. Binds to flap-structured DNA but not to non-flap nicked DNA, and participates in Okazaki fragment processing by stimulating the endonuclease activities of FEN1 and DNA2. Involved in recombination donor preference during mating-type switching via interaction with FKH1. The chain is ATP-dependent DNA helicase MPH1 from Saccharomyces cerevisiae (strain ATCC 204508 / S288c) (Baker's yeast).